An 827-amino-acid polypeptide reads, in one-letter code: DNA gyrase subunit A (827 aa).

The 464-residue stretch at 38–501 folds into the Topo IIA-type catalytic domain; that stretch reads LPDARDGLKP…SYENIDIEDL (464 aa). Tyr-126 acts as the O-(5'-phospho-DNA)-tyrosine intermediate in catalysis. The short motif at 528–534 is the GyrA-box element; it reads QNRGGKG.

It belongs to the type II topoisomerase GyrA/ParC subunit family. As to quaternary structure, heterotetramer, composed of two GyrA and two GyrB chains. In the heterotetramer, GyrA contains the active site tyrosine that forms a transient covalent intermediate with DNA, while GyrB binds cofactors and catalyzes ATP hydrolysis.

The protein resides in the cytoplasm. It catalyses the reaction ATP-dependent breakage, passage and rejoining of double-stranded DNA.. Its function is as follows. A type II topoisomerase that negatively supercoils closed circular double-stranded (ds) DNA in an ATP-dependent manner to modulate DNA topology and maintain chromosomes in an underwound state. Negative supercoiling favors strand separation, and DNA replication, transcription, recombination and repair, all of which involve strand separation. Also able to catalyze the interconversion of other topological isomers of dsDNA rings, including catenanes and knotted rings. Type II topoisomerases break and join 2 DNA strands simultaneously in an ATP-dependent manner. In Helicobacter pylori (strain ATCC 700392 / 26695) (Campylobacter pylori), this protein is DNA gyrase subunit A.